We begin with the raw amino-acid sequence, 706 residues long: Envelope glycoprotein H (706 aa).

A signal peptide spans 1–18; the sequence is MQLLCVFCLVLLWEVGAA. Residues 19-682 are Virion surface-facing; it reads SLSEVKLHLD…LYEERAHVVL (664 aa). Asparagine 60 is a glycosylation site (N-linked (GlcNAc...) asparagine; by host). Positions 165 to 229 are interaction with gL; sequence DKFQYTGAMT…QSGDYSLVIV (65 aa). Cysteine 278 and cysteine 335 are joined by a disulfide. A glycan (N-linked (GlcNAc...) asparagine; by host) is linked at asparagine 435. 2 disulfides stabilise this stretch: cysteine 454–cysteine 478 and cysteine 534–cysteine 587. N-linked (GlcNAc...) asparagine; by host glycosylation is found at asparagine 549 and asparagine 604. An intrachain disulfide couples cysteine 612 to cysteine 615. N-linked (GlcNAc...) asparagine; by host glycosylation occurs at asparagine 664. The helical transmembrane segment at 683–703 threads the bilayer; the sequence is AIILYFIAFALGIFLVHKIVM. The Intravirion segment spans residues 704-706; that stretch reads FFL.

This sequence belongs to the herpesviridae glycoprotein H family. In terms of assembly, interacts with glycoprotein L (gL); this interaction is necessary for the correct processing and cell surface expression of gH. The heterodimer gH/gL seems to interact with gB trimers during fusion. The heterodimer gH/gL interacts with host EPHA2 to facilitate virus internalization and fusion. Interacts with glycoprotein 42/BZLF2. N-glycosylated, O-glycosylated, and sialylated.

It localises to the virion membrane. The protein localises to the host cell membrane. Its subcellular location is the host endosome membrane. Functionally, the heterodimer glycoprotein H-glycoprotein L is required for the fusion of viral and plasma membranes leading to virus entry into the host cell. Following initial binding to host receptor, membrane fusion is mediated by the fusion machinery composed of gB and the heterodimer gH/gL. May also be involved in the fusion between the virion envelope and the outer nuclear membrane during virion morphogenesis. The heterodimer gH/gL targets also host EPHA2 to promote viral entry. The polypeptide is Envelope glycoprotein H (Homo sapiens (Human)).